The primary structure comprises 334 residues: G-protein coupled receptor 12 (334 aa).

The Extracellular portion of the chain corresponds to 1 to 48 (MNEDPKVNLSGLPRDCIEAGTPENISAAVPSQGSVVESEPELVVNPWD). N-linked (GlcNAc...) asparagine glycosylation is found at Asn8 and Asn24. A helical membrane pass occupies residues 49 to 69 (IVLCSSGTLICCENAVVVLII). Residues 70–78 (FHSPSLRAP) are Cytoplasmic-facing. Residues 79–99 (MFLLIGSLALADLLAGLGLII) traverse the membrane as a helical segment. Over 100–113 (NFVFAYLLQSEATK) the chain is Extracellular. The chain crosses the membrane as a helical span at residues 114–134 (LVTIGLIVASFSASVCSLLAI). Residues 135–158 (TVDRYLSLYYALTYHSERTVTFTY) lie on the Cytoplasmic side of the membrane. The helical transmembrane segment at 159-179 (VMLVMLWGTSTCLGLLPVMGW) threads the bilayer. At 180–199 (NCLRDESTCSVVRPLTKNNA) the chain is on the extracellular side. The helical transmembrane segment at 200–220 (AILSISFLFMFALMLQLYIQI) threads the bilayer. Topologically, residues 221-252 (CKIVMRHAHQIALQHHFLATSHYVTTRKGIST) are cytoplasmic. The helical transmembrane segment at 253 to 273 (LALILGTFAACWMPFTLYSLI) threads the bilayer. Topologically, residues 274 to 282 (ADYTYPSIY) are extracellular. Residues 283–303 (TYATLLPATYNSIINPVIYAF) traverse the membrane as a helical segment. The Cytoplasmic portion of the chain corresponds to 304–334 (RNQEIQKALCLICCGCIPNTLSQRARSPSDV). A lipid anchor (S-palmitoyl cysteine) is attached at Cys317. Phosphoserine is present on residues Ser330 and Ser332.

The protein belongs to the G-protein coupled receptor 1 family. Expressed in the brain, pituitary gland and testis.

It is found in the cell membrane. Its function is as follows. Receptor with constitutive G(s) signaling activity that activates cyclic AMP. Promotes neurite outgrowth and blocks myelin inhibition in neurons. The chain is G-protein coupled receptor 12 (Gpr12) from Rattus norvegicus (Rat).